Consider the following 218-residue polypeptide: Small ribosomal subunit protein uS3c (218 aa).

In terms of domain architecture, KH type-2 spans 47-118; it reads VQKNMKTSSG…KLNIAITRIE (72 aa).

It belongs to the universal ribosomal protein uS3 family. As to quaternary structure, part of the 30S ribosomal subunit.

It is found in the plastid. The protein localises to the chloroplast. The chain is Small ribosomal subunit protein uS3c (rps3) from Lactuca sativa (Garden lettuce).